The primary structure comprises 455 residues: tRNA modification GTPase MnmE (455 aa).

3 residues coordinate (6S)-5-formyl-5,6,7,8-tetrahydrofolate: arginine 24, glutamate 81, and lysine 121. The TrmE-type G domain occupies 217 to 378; it reads GMKVVIAGRP…LREHLKDCMG (162 aa). Residue asparagine 227 participates in K(+) binding. GTP-binding positions include 227 to 232, 246 to 252, 271 to 274, and 359 to 361; these read NAGKSS, TDIAGTT, DTAG, and SAR. Residue serine 231 coordinates Mg(2+). K(+) is bound by residues threonine 246, isoleucine 248, and threonine 251. Threonine 252 contacts Mg(2+). Position 455 (lysine 455) interacts with (6S)-5-formyl-5,6,7,8-tetrahydrofolate.

It belongs to the TRAFAC class TrmE-Era-EngA-EngB-Septin-like GTPase superfamily. TrmE GTPase family. Homodimer. Heterotetramer of two MnmE and two MnmG subunits. K(+) serves as cofactor.

Its subcellular location is the cytoplasm. Functionally, exhibits a very high intrinsic GTPase hydrolysis rate. Involved in the addition of a carboxymethylaminomethyl (cmnm) group at the wobble position (U34) of certain tRNAs, forming tRNA-cmnm(5)s(2)U34. The protein is tRNA modification GTPase MnmE of Photobacterium profundum (strain SS9).